Here is a 424-residue protein sequence, read N- to C-terminus: MSILIKNGYVIYGDSLKIIKADIYIENNKISKIGKDLTKSADHVIDAKGRVISPGFINAHTHSPMVLLRGLADDISLMEWLQNYVWPVEKKLKRVHIYWGALLGTLEMIKTGTTTFVDMYFHMEEVAKAVEEIGLRAYLSYGMVDLGDEEKRSIEIRETLKLLKFIESLSSPRVEFLFGPHAPYTCSPKLLTWVREKADETGKMITIHLSETKDEVKQIKEKYGKTPVELLDELGFLKNDVIAAHGVWLTDKEIEILAKRDVTIVHNPASNMKLGSGVMSLEKLLKAGVNVALGTDGAASNNNLDMIEEMKLAALLHKVHTLNPTLADAKTVFKMATQNGAKALRLNAGVIKEGALADVIVIDFNKPHLRPITNIISHIVYSANGNDVETTIVDGKVVMLDREVLTIDEEKILDKVQKIVDKLR.

Zn(2+)-binding residues include His-60 and His-62. Glu-89 and His-181 together coordinate substrate. His-208 is a Zn(2+) binding site. 2 residues coordinate substrate: Glu-211 and Asp-296. Asp-296 serves as a coordination point for Zn(2+).

Belongs to the metallo-dependent hydrolases superfamily. MTA/SAH deaminase family. Zn(2+) is required as a cofactor.

The enzyme catalyses S-adenosyl-L-homocysteine + H2O + H(+) = S-inosyl-L-homocysteine + NH4(+). It carries out the reaction S-methyl-5'-thioadenosine + H2O + H(+) = S-methyl-5'-thioinosine + NH4(+). Catalyzes the deamination of 5-methylthioadenosine and S-adenosyl-L-homocysteine into 5-methylthioinosine and S-inosyl-L-homocysteine, respectively. Is also able to deaminate adenosine. In Thermococcus sibiricus (strain DSM 12597 / MM 739), this protein is 5-methylthioadenosine/S-adenosylhomocysteine deaminase.